A 333-amino-acid chain; its full sequence is Protoheme IX farnesyltransferase (333 aa).

The next 8 helical transmembrane spans lie at 31–51, 52–72, 115–135, 152–172, 178–198, 223–243, 244–264, and 303–323; these read VMSL…APIH, PVLA…SGAL, MFLG…TIVF, IVIG…AATG, AWLM…ALSL, KQIL…VLTG, LGGP…LLLA, and LFAF…GEAV.

Belongs to the UbiA prenyltransferase family. Protoheme IX farnesyltransferase subfamily.

It localises to the cell inner membrane. The catalysed reaction is heme b + (2E,6E)-farnesyl diphosphate + H2O = Fe(II)-heme o + diphosphate. The protein operates within porphyrin-containing compound metabolism; heme O biosynthesis; heme O from protoheme: step 1/1. Its function is as follows. Converts heme B (protoheme IX) to heme O by substitution of the vinyl group on carbon 2 of heme B porphyrin ring with a hydroxyethyl farnesyl side group. This is Protoheme IX farnesyltransferase from Caulobacter vibrioides (strain ATCC 19089 / CIP 103742 / CB 15) (Caulobacter crescentus).